The following is a 372-amino-acid chain: Lectin/endochitinase 1 (372 aa).

A signal peptide spans 1–23 (MMMRFLSAVVIMSSAMAVGLVSA). Gln-24 contacts substrate. Pyrrolidone carboxylic acid is present on Gln-24. 2 consecutive Chitin-binding type-1 domains span residues 24–64 (QRCG…KCWS) and 69–111 (DHRC…RCSS). 4 cysteine pairs are disulfide-bonded: Cys-26–Cys-41, Cys-35–Cys-47, Cys-40–Cys-54, and Cys-58–Cys-62. 42–53 (SIWGWCGDSEPY) contributes to the substrate binding site. Residue His-70 coordinates Zn(2+). Cystine bridges form between Cys-72-Cys-87, Cys-81-Cys-93, Cys-86-Cys-100, and Cys-105-Cys-109. Position 90 (His-90) interacts with Zn(2+). The segment at 113-128 (VRGPRVALSGNSTANS) is spacer. Asn-123 carries N-linked (GlcNAc...) asparagine glycosylation. The tract at residues 129–372 (IGNVVVTEPL…FQRIQMRVAA (244 aa)) is chitinase.

As to quaternary structure, monomer and homodimer. Zinc favors dimerization. Active in the monomeric form but probably inactive in the dimeric form. The interaction with glycans on the mammalian TCR and MHC molecules of the T-cell and antigen-presenting cell, respectively, is inhibited by oligomers of GlcNAc. Post-translationally, proteolytically processed to yield a very small protein (8.5 kDa, 86 AA) containing only the two chitin-binding domains. Rhizomes and inflorescence with immature seeds.

The catalysed reaction is Random endo-hydrolysis of N-acetyl-beta-D-glucosaminide (1-&gt;4)-beta-linkages in chitin and chitodextrins.. Its function is as follows. Functions both as a chitinase and as a N-acetyl-D-glucosamine binding lectin. Inhibits the growth of several phytopathogenic chitin-containing fungi. Also possesses insecticidal activity and superantigenic properties. In Urtica dioica (Great nettle), this protein is Lectin/endochitinase 1 (UDA1).